The chain runs to 388 residues: Envelope protein F13 homolog (388 aa).

Gly2 is lipidated: N-myristoyl glycine; by host. The PLD phosphodiesterase domain maps to 310–337; it reads GDAINNTKLLVVDDEYVHVSNADIDGTH.

Its subcellular location is the virion membrane. The protein resides in the host endoplasmic reticulum membrane. Functionally, envelope protein associated with the inner side of the enveloped virion (EV) membrane. In Molluscum contagiosum virus subtype 2 (MOCV), this protein is Envelope protein F13 homolog (P43K).